We begin with the raw amino-acid sequence, 343 residues long: Selenide, water dikinase (343 aa).

The active site involves Sec-15. A non-standard amino acid (selenocysteine) is located at residue Sec-15. ATP-binding positions include Lys-18 and 45–47; that span reads TAD. Asp-48 is a Mg(2+) binding site. Residues Asp-65, Asp-88, and 135-137 each bind ATP; that span reads GHT. Residue Asp-88 coordinates Mg(2+). Mg(2+) is bound at residue Asp-223.

This sequence belongs to the selenophosphate synthase 1 family. Class I subfamily. Homodimer. Requires Mg(2+) as cofactor.

It carries out the reaction hydrogenselenide + ATP + H2O = selenophosphate + AMP + phosphate + 2 H(+). Synthesizes selenophosphate from selenide and ATP. In Carboxydothermus hydrogenoformans (strain ATCC BAA-161 / DSM 6008 / Z-2901), this protein is Selenide, water dikinase.